A 547-amino-acid chain; its full sequence is Heme-binding protein A (547 aa).

Residues 1-18 form the signal peptide; the sequence is MKLKATLTLAAATLVLAA. Cysteine 19 carries the N-palmitoyl cysteine lipid modification. Cysteine 19 carries S-diacylglycerol cysteine lipidation.

This sequence belongs to the bacterial solute-binding protein 5 family.

The protein resides in the cell inner membrane. Its function is as follows. Important role in heme acquisition or metabolism. The sequence is that of Heme-binding protein A (hbpA) from Haemophilus influenzae (strain ATCC 51907 / DSM 11121 / KW20 / Rd).